A 229-amino-acid polypeptide reads, in one-letter code: MSDYPSCALRLEQVARRYRSGDQELVVLDHADLELRPGEIVALVAPSGTGKSTLLHLAGLLEKPDEGRVWIGSHDAGGLSDTARTALRRDHLGFVYQFHHLLGEFSALENVVLPQMIAGRTRRQAEQHALTLLSAFGLQHRASHLPGMLSGGEQQRVAIARALANGPAVLLADEPTGNLDIHTAETVFSALLSAVRNQNVAALIATHNPDLAGRMDRQVTIREGQIVPA.

The ABC transporter domain occupies 9–229 (LRLEQVARRY…TIREGQIVPA (221 aa)). 45–52 (APSGTGKS) provides a ligand contact to ATP.

The protein belongs to the ABC transporter superfamily. Lipoprotein translocase (TC 3.A.1.125) family. The complex is composed of two ATP-binding proteins (LolD) and two transmembrane proteins (LolC and LolE).

It localises to the cell inner membrane. Functionally, part of the ABC transporter complex LolCDE involved in the translocation of mature outer membrane-directed lipoproteins, from the inner membrane to the periplasmic chaperone, LolA. Responsible for the formation of the LolA-lipoprotein complex in an ATP-dependent manner. In Granulibacter bethesdensis (strain ATCC BAA-1260 / CGDNIH1), this protein is Lipoprotein-releasing system ATP-binding protein LolD.